Reading from the N-terminus, the 1038-residue chain is Probable ubiquitin conjugation factor E4 (1038 aa).

Disordered stretches follow at residues 430–459 (ANDAGRENGNESRLLQSKEATSSSSNASGQ) and 1010–1038 (SHQSKKRTSGEDSSNKERIQTTNSDMLID). Low complexity predominate over residues 446-459 (SKEATSSSSNASGQ). Positions 940 to 1014 (EIPDEFLDPI…DEFVKSHQSK (75 aa)) constitute a U-box domain. Residues 1017-1028 (TSGEDSSNKERI) show a composition bias toward basic and acidic residues. Over residues 1029–1038 (QTTNSDMLID) the composition is skewed to polar residues.

Belongs to the ubiquitin conjugation factor E4 family.

The protein resides in the cytoplasm. Its subcellular location is the nucleus. The enzyme catalyses S-ubiquitinyl-[E2 ubiquitin-conjugating enzyme]-L-cysteine + [acceptor protein]-L-lysine = [E2 ubiquitin-conjugating enzyme]-L-cysteine + N(6)-ubiquitinyl-[acceptor protein]-L-lysine.. Its pathway is protein modification; protein ubiquitination. Functionally, ubiquitin-protein ligase that may function as an E3 ligase in conjunction with specific E1 and E2 ligases. May also function as an E4 ligase mediating the assembly of polyubiquitin chain assembly on substrates monoubiquitinated by another E3 ubiquitin ligase. The chain is Probable ubiquitin conjugation factor E4 (PUB1) from Arabidopsis thaliana (Mouse-ear cress).